A 316-amino-acid chain; its full sequence is Porphobilinogen deaminase (316 aa).

Residue Cys-249 is modified to S-(dipyrrolylmethanemethyl)cysteine.

It belongs to the HMBS family. As to quaternary structure, monomer. Dipyrromethane serves as cofactor.

It catalyses the reaction 4 porphobilinogen + H2O = hydroxymethylbilane + 4 NH4(+). It functions in the pathway porphyrin-containing compound metabolism; protoporphyrin-IX biosynthesis; coproporphyrinogen-III from 5-aminolevulinate: step 2/4. In terms of biological role, tetrapolymerization of the monopyrrole PBG into the hydroxymethylbilane pre-uroporphyrinogen in several discrete steps. This is Porphobilinogen deaminase from Nitrobacter hamburgensis (strain DSM 10229 / NCIMB 13809 / X14).